Here is a 267-residue protein sequence, read N- to C-terminus: Thymidylate synthase (267 aa).

Arginine 24 contacts dUMP. Histidine 54 serves as a coordination point for (6R)-5,10-methylene-5,6,7,8-tetrahydrofolate. 129 to 130 contacts dUMP; the sequence is RR. The active-site Nucleophile is the cysteine 149. Residues 169–172, asparagine 180, and 210–212 contribute to the dUMP site; these read RSAD and HVY. Aspartate 172 contributes to the (6R)-5,10-methylene-5,6,7,8-tetrahydrofolate binding site. Residue alanine 266 participates in (6R)-5,10-methylene-5,6,7,8-tetrahydrofolate binding.

This sequence belongs to the thymidylate synthase family. Bacterial-type ThyA subfamily. Homodimer.

Its subcellular location is the cytoplasm. It carries out the reaction dUMP + (6R)-5,10-methylene-5,6,7,8-tetrahydrofolate = 7,8-dihydrofolate + dTMP. It participates in pyrimidine metabolism; dTTP biosynthesis. Its function is as follows. Catalyzes the reductive methylation of 2'-deoxyuridine-5'-monophosphate (dUMP) to 2'-deoxythymidine-5'-monophosphate (dTMP) while utilizing 5,10-methylenetetrahydrofolate (mTHF) as the methyl donor and reductant in the reaction, yielding dihydrofolate (DHF) as a by-product. This enzymatic reaction provides an intracellular de novo source of dTMP, an essential precursor for DNA biosynthesis. In Paenarthrobacter aurescens (strain TC1), this protein is Thymidylate synthase.